We begin with the raw amino-acid sequence, 103 residues long: Protein SUP-1 (103 aa).

Positions 1–16 (MMSYIALAACIGLAMA) are cleaved as a signal peptide. Topologically, residues 17–75 (ANVDHDVKSAVNEVTTTKDGDTYCPVPLVGTKCGTSSIFHYWKCCGELNKECCFNLQTW) are extracellular. A helical transmembrane segment spans residues 76–96 (VWVTLALFGVIFIASFVISLV). Topologically, residues 97–103 (RCICCRK) are cytoplasmic.

Expressed in a subset of neurons and in body wall muscles. In the nervous system, expressed specifically in cholinergic motor neurons of the ventral nerve cord, a subset of cholinergic head neurons, anterior sublateral neurons, and body sublateral neurons (at protein level).

The protein localises to the cell membrane. It localises to the perikaryon. The protein resides in the cell projection. Its subcellular location is the synapse. It is found in the cytoplasmic vesicle. The protein localises to the secretory vesicle. It localises to the synaptic vesicle. In terms of biological role, may be involved in trafficking or stabilization of the vesicular acetylcholine transporter unc-17. The sequence is that of Protein SUP-1 from Caenorhabditis elegans.